The following is a 400-amino-acid chain: Enoyl-[acyl-carrier-protein] reductase [NADH] (400 aa).

NAD(+) contacts are provided by residues 48–53 (GSSSGY), 74–75 (FE), 111–112 (DA), and 139–140 (LA). Tyr-225 lines the substrate pocket. Residue Tyr-235 is the Proton donor of the active site. NAD(+) is bound by residues Lys-244 and 273-275 (VVT).

This sequence belongs to the TER reductase family. As to quaternary structure, monomer.

It catalyses the reaction a 2,3-saturated acyl-[ACP] + NAD(+) = a (2E)-enoyl-[ACP] + NADH + H(+). The protein operates within lipid metabolism; fatty acid biosynthesis. In terms of biological role, involved in the final reduction of the elongation cycle of fatty acid synthesis (FAS II). Catalyzes the reduction of a carbon-carbon double bond in an enoyl moiety that is covalently linked to an acyl carrier protein (ACP). The sequence is that of Enoyl-[acyl-carrier-protein] reductase [NADH] from Shewanella woodyi (strain ATCC 51908 / MS32).